A 279-amino-acid polypeptide reads, in one-letter code: MGIVFNYIDPVAFNLGPLSVRWYGIIIAVGILLGYFVAQRALVKAGLHKDTLVDIIFYSALFGFIAARIYFVIFQWPYYAENPSEIIKIWHGGIAIHGGLIGGFIAGVIVCKVKNLNPFQIGDIVAPSIILAQGIGRWGNFMNHEAHGGPVSRAFLEQLHLPNFIIENMYINGQYYHPTFLYESIWDVAGFIILVNIRKHLKLGETFFLYLTWYSIGRFFIEGLRTDSLMLTSNIRVAQLVSILLILISISLIVYRRIKYNPPLYSKVGALPWPTKKVK.

A run of 3 helical transmembrane segments spans residues 18–38, 55–75, and 89–109; these read LSVR…YFVA, IIFY…VIFQ, and IWHG…AGVI. Arg-137 lines the a 1,2-diacyl-sn-glycero-3-phospho-(1'-sn-glycerol) pocket. Transmembrane regions (helical) follow at residues 203–223 and 235–255; these read LGET…FIEG and IRVA…LIVY.

Belongs to the Lgt family.

The protein localises to the cell membrane. It catalyses the reaction L-cysteinyl-[prolipoprotein] + a 1,2-diacyl-sn-glycero-3-phospho-(1'-sn-glycerol) = an S-1,2-diacyl-sn-glyceryl-L-cysteinyl-[prolipoprotein] + sn-glycerol 1-phosphate + H(+). Its pathway is protein modification; lipoprotein biosynthesis (diacylglyceryl transfer). Catalyzes the transfer of the diacylglyceryl group from phosphatidylglycerol to the sulfhydryl group of the N-terminal cysteine of a prolipoprotein, the first step in the formation of mature lipoproteins. In Staphylococcus aureus (strain Mu3 / ATCC 700698), this protein is Phosphatidylglycerol--prolipoprotein diacylglyceryl transferase.